We begin with the raw amino-acid sequence, 326 residues long: UDP-3-O-acylglucosamine N-acyltransferase (326 aa).

The Proton acceptor role is filled by histidine 225.

The protein belongs to the transferase hexapeptide repeat family. LpxD subfamily. Homotrimer.

It carries out the reaction a UDP-3-O-[(3R)-3-hydroxyacyl]-alpha-D-glucosamine + a (3R)-hydroxyacyl-[ACP] = a UDP-2-N,3-O-bis[(3R)-3-hydroxyacyl]-alpha-D-glucosamine + holo-[ACP] + H(+). Its pathway is bacterial outer membrane biogenesis; LPS lipid A biosynthesis. In terms of biological role, catalyzes the N-acylation of UDP-3-O-acylglucosamine using 3-hydroxyacyl-ACP as the acyl donor. Is involved in the biosynthesis of lipid A, a phosphorylated glycolipid that anchors the lipopolysaccharide to the outer membrane of the cell. This chain is UDP-3-O-acylglucosamine N-acyltransferase, found in Verminephrobacter eiseniae (strain EF01-2).